A 199-amino-acid polypeptide reads, in one-letter code: Peroxiredoxin 2 (199 aa).

Positions 1–152 (MGQKAPDFTV…IIRVIKALQF (152 aa)) constitute a Thioredoxin domain. Residue C40 is the Cysteine sulfenic acid (-SOH) intermediate of the active site. R115 contacts substrate.

This sequence belongs to the peroxiredoxin family. Prx6 subfamily. In terms of assembly, homodecamer. Pentamer of dimers that assemble into a ring structure.

It is found in the cytoplasm. The enzyme catalyses a hydroperoxide + [thioredoxin]-dithiol = an alcohol + [thioredoxin]-disulfide + H2O. Thiol-specific peroxidase that catalyzes the reduction of hydrogen peroxide and organic hydroperoxides to water and alcohols, respectively. Plays a role in cell protection against oxidative stress by detoxifying peroxides. This chain is Peroxiredoxin 2, found in Thermoplasma acidophilum (strain ATCC 25905 / DSM 1728 / JCM 9062 / NBRC 15155 / AMRC-C165).